The following is a 404-amino-acid chain: Flavohemoprotein (404 aa).

Residues 1–138 (MLSEQTRSLV…LADTLIGIEN (138 aa)) form the Globin domain. Residue His85 coordinates heme b. Active-site charge relay system residues include Tyr95 and Glu137. Positions 149–404 (GGWSGWRPFR…EVFGSHPGDD (256 aa)) are reductase. The FAD-binding FR-type domain occupies 152–263 (SGWRPFRVAK…SAPQGDFFLH (112 aa)). FAD is bound by residues Tyr190 and 206-209 (RQYS). 276–281 (GVGQTP) is an NADP(+) binding site. An FAD-binding site is contributed by 396-399 (VFGS).

The protein belongs to the globin family. Two-domain flavohemoproteins subfamily. In the C-terminal section; belongs to the flavoprotein pyridine nucleotide cytochrome reductase family. Requires heme b as cofactor. FAD serves as cofactor.

It catalyses the reaction 2 nitric oxide + NADPH + 2 O2 = 2 nitrate + NADP(+) + H(+). The catalysed reaction is 2 nitric oxide + NADH + 2 O2 = 2 nitrate + NAD(+) + H(+). Functionally, is involved in NO detoxification in an aerobic process, termed nitric oxide dioxygenase (NOD) reaction that utilizes O(2) and NAD(P)H to convert NO to nitrate, which protects the bacterium from various noxious nitrogen compounds. Therefore, plays a central role in the inducible response to nitrosative stress. In Chromobacterium violaceum (strain ATCC 12472 / DSM 30191 / JCM 1249 / CCUG 213 / NBRC 12614 / NCIMB 9131 / NCTC 9757 / MK), this protein is Flavohemoprotein.